The following is a 518-amino-acid chain: GMP synthase [glutamine-hydrolyzing] (518 aa).

In terms of domain architecture, Glutamine amidotransferase type-1 spans 6–200 (RLLIIDFGSQ…FVRLAGFKGD (195 aa)). Cysteine 84 acts as the Nucleophile in catalysis. Catalysis depends on residues histidine 175 and glutamate 177. Residues 201-393 (WTMGAYREEA…LGLPESFIGR (193 aa)) enclose the GMPS ATP-PPase domain. Position 228–234 (228–234 (SGGVDSS)) interacts with ATP.

In terms of assembly, homodimer.

The catalysed reaction is XMP + L-glutamine + ATP + H2O = GMP + L-glutamate + AMP + diphosphate + 2 H(+). It functions in the pathway purine metabolism; GMP biosynthesis; GMP from XMP (L-Gln route): step 1/1. Catalyzes the synthesis of GMP from XMP. In Cereibacter sphaeroides (strain ATCC 17023 / DSM 158 / JCM 6121 / CCUG 31486 / LMG 2827 / NBRC 12203 / NCIMB 8253 / ATH 2.4.1.) (Rhodobacter sphaeroides), this protein is GMP synthase [glutamine-hydrolyzing].